A 425-amino-acid polypeptide reads, in one-letter code: Serine--tRNA ligase (425 aa).

230–232 (TAE) is an L-serine binding site. Residue 261–263 (RSE) coordinates ATP. An L-serine-binding site is contributed by E284. Residue 348 to 351 (EISS) coordinates ATP. S384 provides a ligand contact to L-serine.

This sequence belongs to the class-II aminoacyl-tRNA synthetase family. Type-1 seryl-tRNA synthetase subfamily. As to quaternary structure, homodimer. The tRNA molecule binds across the dimer.

The protein resides in the cytoplasm. The catalysed reaction is tRNA(Ser) + L-serine + ATP = L-seryl-tRNA(Ser) + AMP + diphosphate + H(+). The enzyme catalyses tRNA(Sec) + L-serine + ATP = L-seryl-tRNA(Sec) + AMP + diphosphate + H(+). Its pathway is aminoacyl-tRNA biosynthesis; selenocysteinyl-tRNA(Sec) biosynthesis; L-seryl-tRNA(Sec) from L-serine and tRNA(Sec): step 1/1. Catalyzes the attachment of serine to tRNA(Ser). Is also able to aminoacylate tRNA(Sec) with serine, to form the misacylated tRNA L-seryl-tRNA(Sec), which will be further converted into selenocysteinyl-tRNA(Sec). The sequence is that of Serine--tRNA ligase from Streptococcus pyogenes serotype M4 (strain MGAS10750).